Here is a 506-residue protein sequence, read N- to C-terminus: NAD(P)H-quinone oxidoreductase subunit 2 (506 aa).

13 helical membrane-spanning segments follow: residues 14-34, 42-62, 79-99, 108-128, 132-152, 167-187, 206-226, 240-260, 276-296, 302-322, 330-350, 374-394, and 409-429; these read AIIP…VDLA, WAPI…ALQW, LAIS…LISW, PIGE…LLCG, LISV…LSGY, LLVG…LYGL, FITS…IAAV, PTPV…AFAI, LLFT…ALAQ, MLAY…VSGT, VLYL…VILF, LGLS…GFFG, and LLVI…ISVI.

This sequence belongs to the complex I subunit 2 family. As to quaternary structure, NDH-1 can be composed of about 15 different subunits; different subcomplexes with different compositions have been identified which probably have different functions.

It is found in the cellular thylakoid membrane. It carries out the reaction a plastoquinone + NADH + (n+1) H(+)(in) = a plastoquinol + NAD(+) + n H(+)(out). The enzyme catalyses a plastoquinone + NADPH + (n+1) H(+)(in) = a plastoquinol + NADP(+) + n H(+)(out). In terms of biological role, NDH-1 shuttles electrons from an unknown electron donor, via FMN and iron-sulfur (Fe-S) centers, to quinones in the respiratory and/or the photosynthetic chain. The immediate electron acceptor for the enzyme in this species is believed to be plastoquinone. Couples the redox reaction to proton translocation, and thus conserves the redox energy in a proton gradient. Cyanobacterial NDH-1 also plays a role in inorganic carbon-concentration. The protein is NAD(P)H-quinone oxidoreductase subunit 2 of Prochlorococcus marinus (strain MIT 9215).